A 295-amino-acid polypeptide reads, in one-letter code: Ribosomal protein L11 methyltransferase (295 aa).

Thr-146, Gly-167, Asp-189, and Asn-231 together coordinate S-adenosyl-L-methionine.

The protein belongs to the methyltransferase superfamily. PrmA family.

It localises to the cytoplasm. It catalyses the reaction L-lysyl-[protein] + 3 S-adenosyl-L-methionine = N(6),N(6),N(6)-trimethyl-L-lysyl-[protein] + 3 S-adenosyl-L-homocysteine + 3 H(+). Methylates ribosomal protein L11. The chain is Ribosomal protein L11 methyltransferase from Vibrio vulnificus (strain YJ016).